Reading from the N-terminus, the 78-residue chain is NAD(P)H-quinone oxidoreductase subunit L (78 aa).

2 helical membrane passes run 10–30 and 47–67; these read IILIIYAALAGAYFLVMPAIV and VFMYFLMFLFFPGMLVLSPFL.

This sequence belongs to the complex I NdhL subunit family. NDH-1 can be composed of about 15 different subunits; different subcomplexes with different compositions have been identified which probably have different functions.

Its subcellular location is the cellular thylakoid membrane. It carries out the reaction a plastoquinone + NADH + (n+1) H(+)(in) = a plastoquinol + NAD(+) + n H(+)(out). It catalyses the reaction a plastoquinone + NADPH + (n+1) H(+)(in) = a plastoquinol + NADP(+) + n H(+)(out). NDH-1 shuttles electrons from an unknown electron donor, via FMN and iron-sulfur (Fe-S) centers, to quinones in the respiratory and/or the photosynthetic chain. The immediate electron acceptor for the enzyme in this species is believed to be plastoquinone. Couples the redox reaction to proton translocation, and thus conserves the redox energy in a proton gradient. Cyanobacterial NDH-1 also plays a role in inorganic carbon-concentration. This Trichodesmium erythraeum (strain IMS101) protein is NAD(P)H-quinone oxidoreductase subunit L.